Consider the following 88-residue polypeptide: Defensin-like protein 24 (88 aa).

The signal sequence occupies residues 1–23 (MASSKFVLFAILALSLLLSGTEA). Cystine bridges form between Cys-37/Cys-87, Cys-47/Cys-72, Cys-56/Cys-83, and Cys-60/Cys-85.

The protein belongs to the DEFL family.

It is found in the secreted. This is Defensin-like protein 24 from Arabidopsis thaliana (Mouse-ear cress).